Consider the following 98-residue polypeptide: Aspartyl/glutamyl-tRNA(Asn/Gln) amidotransferase subunit C (98 aa).

The tract at residues 76–98 (QVLSGAPDAEDGRFKVPAILEED) is disordered.

Belongs to the GatC family. Heterotrimer of A, B and C subunits.

The catalysed reaction is L-glutamyl-tRNA(Gln) + L-glutamine + ATP + H2O = L-glutaminyl-tRNA(Gln) + L-glutamate + ADP + phosphate + H(+). It carries out the reaction L-aspartyl-tRNA(Asn) + L-glutamine + ATP + H2O = L-asparaginyl-tRNA(Asn) + L-glutamate + ADP + phosphate + 2 H(+). Its function is as follows. Allows the formation of correctly charged Asn-tRNA(Asn) or Gln-tRNA(Gln) through the transamidation of misacylated Asp-tRNA(Asn) or Glu-tRNA(Gln) in organisms which lack either or both of asparaginyl-tRNA or glutaminyl-tRNA synthetases. The reaction takes place in the presence of glutamine and ATP through an activated phospho-Asp-tRNA(Asn) or phospho-Glu-tRNA(Gln). The protein is Aspartyl/glutamyl-tRNA(Asn/Gln) amidotransferase subunit C of Renibacterium salmoninarum (strain ATCC 33209 / DSM 20767 / JCM 11484 / NBRC 15589 / NCIMB 2235).